Here is a 156-residue protein sequence, read N- to C-terminus: Small ribosomal subunit protein uS7 (156 aa).

Belongs to the universal ribosomal protein uS7 family. Part of the 30S ribosomal subunit. Contacts proteins S9 and S11.

One of the primary rRNA binding proteins, it binds directly to 16S rRNA where it nucleates assembly of the head domain of the 30S subunit. Is located at the subunit interface close to the decoding center, probably blocks exit of the E-site tRNA. The protein is Small ribosomal subunit protein uS7 of Thermobifida fusca (strain YX).